Reading from the N-terminus, the 169-residue chain is Small ribosomal subunit protein bS16 (169 aa).

The interval 114–169 (AEGPTAEAITEKRRKAKEEAEAKAAAEAEAAEKAEAEAAEKAAAEAAEESEEASAE) is disordered. Residues 129-156 (AKEEAEAKAAAEAEAAEKAEAEAAEKAA) show a composition bias toward basic and acidic residues. Acidic residues predominate over residues 159–169 (AAEESEEASAE).

This sequence belongs to the bacterial ribosomal protein bS16 family.

This chain is Small ribosomal subunit protein bS16, found in Corynebacterium urealyticum (strain ATCC 43042 / DSM 7109).